The chain runs to 35 residues: Coenzyme PQQ synthesis protein A (35 aa).

Positions 16–20 (EINMY) form a cross-link, pyrroloquinoline quinone (Glu-Tyr).

The protein belongs to the PqqA family.

It participates in cofactor biosynthesis; pyrroloquinoline quinone biosynthesis. Its function is as follows. Required for coenzyme pyrroloquinoline quinone (PQQ) biosynthesis. PQQ is probably formed by cross-linking a specific glutamate to a specific tyrosine residue and excising these residues from the peptide. The sequence is that of Coenzyme PQQ synthesis protein A from Ruegeria pomeroyi (strain ATCC 700808 / DSM 15171 / DSS-3) (Silicibacter pomeroyi).